The chain runs to 60 residues: Large ribosomal subunit protein bL32 (60 aa).

The segment at 1 to 60 (MAVQQVKKSRSKRDIRRSHDSLTNPTLSTDKSTGELHLRHHVSPNGFYKGRKVVDTKSED) is disordered. The span at 7-16 (KKSRSKRDIR) shows a compositional bias: basic residues. Residues 22–31 (LTNPTLSTDK) are compositionally biased toward polar residues.

The protein belongs to the bacterial ribosomal protein bL32 family.

This is Large ribosomal subunit protein bL32 from Francisella tularensis subsp. tularensis (strain SCHU S4 / Schu 4).